Consider the following 493-residue polypeptide: MSSAKRSTSRVSKKKAAPAKDGAPKKREQSTRYKYVELNKASLTSAEAQHFYGVVIDATFPYKTNQERYICSLKVVDPSLYLKSQKGTGDASDYATLVLYAKRFEDLPIIHRIGDIIRVHRATLRLYNGQRQFNANVFYNSSWALFSTDKKSALQEIGGQEPASDLTPFAFSGKNYTFEKSEAALLQNIRKWAVQYFQQYNVISSDMFTPLNKAQAQKGDFDVVAKILQVFELDEYTNELKLKDQSGQVFYTLALKLKFPHLRAGEVVRIRSATYDETSTQKKVLLLSHYSNIVTFVSASKLAKEVKAKVTDDKSVEKAALKQDVSLSAVVLTEVDKKHAGLPTHSLQDLFHNADTDKEISSKDTFRTQFYITRVEPVDVKEWVKSYDRKTKKPSSHKGAGAKGGENIFQVQFLVKDASTQLNNNTYRVLLYTQDGLGANFFNVKPDNLYKNNDARKKLEEYNELLTKFNSYVDAVVERRNGFYFIKDTRIIF.

Residues 1–30 (MSSAKRSTSRVSKKKAAPAKDGAPKKREQS) form a disordered region. Basic residues predominate over residues 7-17 (STSRVSKKKAA).

This sequence belongs to the telombin family. In terms of assembly, heterodimer of an alpha and a beta subunit.

The protein resides in the nucleus. It is found in the chromosome. The protein localises to the telomere. In terms of biological role, may function as protective capping of the single-stranded telomeric overhang. May also participate in telomere length regulation during DNA replication. The sequence is that of Telomere-binding protein subunit alpha (STY56V) from Stylonychia mytilus (Ciliate).